The sequence spans 357 residues: tRNA N6-adenosine threonylcarbamoyltransferase (357 aa).

Fe cation contacts are provided by H115 and H119. Substrate contacts are provided by residues 137 to 141, D170, G183, and N281; that span reads LASGG. Residue D309 coordinates Fe cation.

The protein belongs to the KAE1 / TsaD family. Requires Fe(2+) as cofactor.

Its subcellular location is the cytoplasm. It carries out the reaction L-threonylcarbamoyladenylate + adenosine(37) in tRNA = N(6)-L-threonylcarbamoyladenosine(37) in tRNA + AMP + H(+). In terms of biological role, required for the formation of a threonylcarbamoyl group on adenosine at position 37 (t(6)A37) in tRNAs that read codons beginning with adenine. Is involved in the transfer of the threonylcarbamoyl moiety of threonylcarbamoyl-AMP (TC-AMP) to the N6 group of A37, together with TsaE and TsaB. TsaD likely plays a direct catalytic role in this reaction. This is tRNA N6-adenosine threonylcarbamoyltransferase from Bradyrhizobium diazoefficiens (strain JCM 10833 / BCRC 13528 / IAM 13628 / NBRC 14792 / USDA 110).